Consider the following 568-residue polypeptide: 2-succinyl-5-enolpyruvyl-6-hydroxy-3-cyclohexene-1-carboxylate synthase (568 aa).

This sequence belongs to the TPP enzyme family. MenD subfamily. Homodimer. Mg(2+) is required as a cofactor. Mn(2+) serves as cofactor. It depends on thiamine diphosphate as a cofactor.

It carries out the reaction isochorismate + 2-oxoglutarate + H(+) = 5-enolpyruvoyl-6-hydroxy-2-succinyl-cyclohex-3-ene-1-carboxylate + CO2. It participates in quinol/quinone metabolism; 1,4-dihydroxy-2-naphthoate biosynthesis; 1,4-dihydroxy-2-naphthoate from chorismate: step 2/7. The protein operates within quinol/quinone metabolism; menaquinone biosynthesis. Its function is as follows. Catalyzes the thiamine diphosphate-dependent decarboxylation of 2-oxoglutarate and the subsequent addition of the resulting succinic semialdehyde-thiamine pyrophosphate anion to isochorismate to yield 2-succinyl-5-enolpyruvyl-6-hydroxy-3-cyclohexene-1-carboxylate (SEPHCHC). The sequence is that of 2-succinyl-5-enolpyruvyl-6-hydroxy-3-cyclohexene-1-carboxylate synthase from Actinobacillus succinogenes (strain ATCC 55618 / DSM 22257 / CCUG 43843 / 130Z).